Consider the following 596-residue polypeptide: Aspartate--tRNA(Asp/Asn) ligase (596 aa).

L-aspartate is bound at residue glutamate 175. Positions 199–202 (QQYK) are aspartate. L-aspartate-binding residues include arginine 221 and histidine 454. 221–223 (RDE) provides a ligand contact to ATP. Residue glutamate 488 coordinates ATP. Arginine 495 lines the L-aspartate pocket. 540-543 (GIDR) is an ATP binding site.

It belongs to the class-II aminoacyl-tRNA synthetase family. Type 1 subfamily. Homodimer.

It localises to the cytoplasm. It carries out the reaction tRNA(Asx) + L-aspartate + ATP = L-aspartyl-tRNA(Asx) + AMP + diphosphate. Aspartyl-tRNA synthetase with relaxed tRNA specificity since it is able to aspartylate not only its cognate tRNA(Asp) but also tRNA(Asn). Reaction proceeds in two steps: L-aspartate is first activated by ATP to form Asp-AMP and then transferred to the acceptor end of tRNA(Asp/Asn). The protein is Aspartate--tRNA(Asp/Asn) ligase of Rhizobium rhizogenes (strain K84 / ATCC BAA-868) (Agrobacterium radiobacter).